Reading from the N-terminus, the 973-residue chain is FHF complex subunit HOOK-interacting protein 1B (973 aa).

3 disordered regions span residues 466–493 (SSPSRPEHASWARGPGSPSVDSSSVVTV), 510–547 (SLGGSESPAPAPRSPGLATSPASSPGRRPSPVEEPGEL), and 573–647 (SAPY…EGAK). Residue S467 is modified to Phosphoserine. A compositionally biased stretch (low complexity) spans 482–493 (SPSVDSSSVVTV). Residues S510, S523, S529, and S533 each carry the phosphoserine modification. Composition is skewed to low complexity over residues 529-538 (SPASSPGRRP) and 622-639 (GARESLGHLPPPQLNGLP). Residues S859 and S898 each carry the phosphoserine modification.

It belongs to the FHIP family. Component of the FTS/Hook/FHIP complex (FHF complex), composed of AKTIP/FTS, FHIP1B, and one or more members of the Hook family of proteins HOOK1, HOOK2, and HOOK3. The FHF complex associates with the homotypic vesicular sorting complex (the HOPS complex).

Its function is as follows. Component of the FTS/Hook/FHIP complex (FHF complex). The FHF complex may function to promote vesicle trafficking and/or fusion via the homotypic vesicular protein sorting complex (the HOPS complex). FHF complex promotes the distribution of AP-4 complex to the perinuclear area of the cell. The protein is FHF complex subunit HOOK-interacting protein 1B (FHIP1B) of Bos taurus (Bovine).